The following is a 430-amino-acid chain: N-lysine methyltransferase SMYD2-B (430 aa).

In terms of domain architecture, SET spans 5 to 239; sequence EGLERFDSPG…AGEEVFTSYI (235 aa). S-adenosyl-L-methionine is bound at residue 15-17; the sequence is KGR. Zn(2+) contacts are provided by Cys50, Cys53, Cys63, Cys66, Cys72, Cys76, His84, and Cys88. Residues 50–88 form an MYND-type zinc finger; sequence CDFCFTRKEGLSKCGKCKQAFYCNVDCQKGDWPMHKLEC. S-adenosyl-L-methionine-binding positions include His135, 204 to 205, and 256 to 258; these read NH and YFF.

This sequence belongs to the class V-like SAM-binding methyltransferase superfamily.

It is found in the cytoplasm. It localises to the cytosol. The protein localises to the nucleus. The enzyme catalyses L-lysyl(4)-[histone H3] + 3 S-adenosyl-L-methionine = N(6),N(6),N(6)-trimethyl-L-lysyl(4)-[histone H3] + 3 S-adenosyl-L-homocysteine + 3 H(+). The catalysed reaction is L-lysyl-[protein] + S-adenosyl-L-methionine = N(6)-methyl-L-lysyl-[protein] + S-adenosyl-L-homocysteine + H(+). Its function is as follows. Protein-lysine N-methyltransferase that methylates both histones and non-histone proteins, including p53/TP53 and RB1. Specifically trimethylates histone H3 'Lys-4' (H3K4me3) in vivo. The activity requires interaction with HSP90alpha. Shows even higher methyltransferase activity on p53/TP53. Monomethylates 'Lys-370' of p53/TP53, leading to decreased DNA-binding activity and subsequent transcriptional regulation activity of p53/TP53. Monomethylates RB1 at 'Lys-860'. This Xenopus laevis (African clawed frog) protein is N-lysine methyltransferase SMYD2-B (smyd2-b).